The primary structure comprises 420 residues: UDP-N-acetylglucosamine 1-carboxyvinyltransferase (420 aa).

A phosphoenolpyruvate-binding site is contributed by 22 to 23 (KN). Arg-94 provides a ligand contact to UDP-N-acetyl-alpha-D-glucosamine. The active-site Proton donor is Cys-118. Cys-118 carries the post-translational modification 2-(S-cysteinyl)pyruvic acid O-phosphothioketal. 2 residues coordinate UDP-N-acetyl-alpha-D-glucosamine: Asp-307 and Ile-329.

This sequence belongs to the EPSP synthase family. MurA subfamily.

The protein localises to the cytoplasm. It catalyses the reaction phosphoenolpyruvate + UDP-N-acetyl-alpha-D-glucosamine = UDP-N-acetyl-3-O-(1-carboxyvinyl)-alpha-D-glucosamine + phosphate. It functions in the pathway cell wall biogenesis; peptidoglycan biosynthesis. Its function is as follows. Cell wall formation. Adds enolpyruvyl to UDP-N-acetylglucosamine. The sequence is that of UDP-N-acetylglucosamine 1-carboxyvinyltransferase from Granulibacter bethesdensis (strain ATCC BAA-1260 / CGDNIH1).